A 213-amino-acid polypeptide reads, in one-letter code: MAQLSLLVLSLFLTLISLPPPGASISSCNGPCRDLNDCDGQLICIEGKCNDDPEVGTHICRGTTPSPQPGGCKPSGTLTCRGKSHPTYDCSPPVTSSTPAKLTNNDFSEGGDGGGPSECDESYHSNNERIVALSTGWYNGGSRCGKMIRITASNGKSVSAKVVDKCDSRHGCDKEHAGQPPCRNNIVDGSNAVWSALGLDKNVGVVDITWSMA.

Residues 1 to 24 form the signal peptide; that stretch reads MAQLSLLVLSLFLTLISLPPPGAS. Cystine bridges form between Cys-28-Cys-60, Cys-32-Cys-44, and Cys-38-Cys-49. 4-hydroxyproline is present on residues Pro-65 and Pro-67. 4 cysteine pairs are disulfide-bonded: Cys-72–Cys-90, Cys-80–Cys-172, Cys-119–Cys-144, and Cys-166–Cys-182. Positions 91 to 121 are disordered; sequence SPPVTSSTPAKLTNNDFSEGGDGGGPSECDE. A compositionally biased stretch (polar residues) spans 93 to 107; that stretch reads PVTSSTPAKLTNNDF.

The protein belongs to the kiwellin family. Undergoes proteolytic cleavage by actinidin to produce kissper and KiTH. Three forms of KiTH are produced by cleavage at different sites.

Its subcellular location is the secreted. Kissper is an anion-selective pore-forming peptide. This Actinidia chinensis var. chinensis (Chinese soft-hair kiwi) protein is Kiwellin.